Reading from the N-terminus, the 657-residue chain is Probable cytochrome P450 556A1 (657 aa).

Residues 2 to 24 (FLTSILYTIIIILIFYKGLEYLI) form a helical membrane-spanning segment. The segment at 440-486 (RSLPSINNNNNNNNNNNNNNNNNNNNNNNNNSNNNSINGNNKNNNRN) is disordered. Residues 446–486 (NNNNNNNNNNNNNNNNNNNNNNNNNSNNNSINGNNKNNNRN) show a composition bias toward low complexity. Residue C587 participates in heme binding.

Belongs to the cytochrome P450 family. The cofactor is heme.

Its subcellular location is the membrane. This chain is Probable cytochrome P450 556A1 (cyp556A1), found in Dictyostelium discoideum (Social amoeba).